Reading from the N-terminus, the 545-residue chain is Signal peptide peptidase-like 4 (545 aa).

The N-terminal stretch at methionine 1–glycine 25 is a signal peptide. Topologically, residues glycine 26 to glutamate 193 are lumenal. N-linked (GlcNAc...) asparagine glycosylation is found at asparagine 81 and asparagine 147. One can recognise a PA domain in the interval proline 90 to lysine 170. A helical membrane pass occupies residues valine 194–serine 214. Residues alanine 215–aspartate 246 lie on the Cytoplasmic side of the membrane. The helical transmembrane segment at isoleucine 247–tyrosine 267 threads the bilayer. Residues lysine 268–glutamate 276 lie on the Lumenal side of the membrane. Residues leucine 277 to leucine 297 form a helical membrane-spanning segment. The Cytoplasmic portion of the chain corresponds to leucine 298–alanine 317. A helical transmembrane segment spans residues valine 318–valine 338. At tyrosine 339–threonine 343 the chain is on the lumenal side. Residues tyrosine 344 to valine 364 form a helical membrane-spanning segment. Over arginine 365–serine 373 the chain is Cytoplasmic. A helical membrane pass occupies residues valine 374–phenylalanine 394. Aspartate 383 is a catalytic residue. The Lumenal segment spans residues histidine 395–glycine 427. Residues glycine 428 to leucine 448 form a helical membrane-spanning segment. Aspartate 436 is an active-site residue. Residues arginine 449 to serine 460 lie on the Cytoplasmic side of the membrane. Residues glycine 461–leucine 481 traverse the membrane as a helical segment. Topologically, residues asparagine 482 to aspartate 485 are lumenal. The helical transmembrane segment at glycine 486 to leucine 506 threads the bilayer. The PAL signature appears at proline 490–leucine 492. Topologically, residues glycine 507–serine 545 are cytoplasmic.

It belongs to the peptidase A22B family. Post-translationally, glycosylated.

It localises to the endosome membrane. Its function is as follows. Intramembrane-cleaving aspartic protease (I-CLiP) that cleaves type II membrane signal peptides in the hydrophobic plane of the membrane. The sequence is that of Signal peptide peptidase-like 4 (SPPL4) from Oryza sativa subsp. japonica (Rice).